Reading from the N-terminus, the 337-residue chain is Aspartate carbamoyltransferase catalytic subunit (337 aa).

Arg-57 and Thr-58 together coordinate carbamoyl phosphate. Lys-86 is an L-aspartate binding site. The carbamoyl phosphate site is built by Arg-107, His-135, and Gln-138. The L-aspartate site is built by Arg-172 and Arg-234. Carbamoyl phosphate is bound by residues Leu-274 and Pro-275.

Belongs to the aspartate/ornithine carbamoyltransferase superfamily. ATCase family. Heterododecamer (2C3:3R2) of six catalytic PyrB chains organized as two trimers (C3), and six regulatory PyrI chains organized as three dimers (R2).

It carries out the reaction carbamoyl phosphate + L-aspartate = N-carbamoyl-L-aspartate + phosphate + H(+). Its pathway is pyrimidine metabolism; UMP biosynthesis via de novo pathway; (S)-dihydroorotate from bicarbonate: step 2/3. Functionally, catalyzes the condensation of carbamoyl phosphate and aspartate to form carbamoyl aspartate and inorganic phosphate, the committed step in the de novo pyrimidine nucleotide biosynthesis pathway. The protein is Aspartate carbamoyltransferase catalytic subunit of Saccharophagus degradans (strain 2-40 / ATCC 43961 / DSM 17024).